We begin with the raw amino-acid sequence, 90 residues long: Small ribosomal subunit protein bS20 (90 aa).

The tract at residues Met-1 to Arg-25 is disordered.

It belongs to the bacterial ribosomal protein bS20 family.

Functionally, binds directly to 16S ribosomal RNA. The sequence is that of Small ribosomal subunit protein bS20 from Burkholderia multivorans (strain ATCC 17616 / 249).